Here is a 255-residue protein sequence, read N- to C-terminus: Triosephosphate isomerase (255 aa).

9-11 (NWK) contacts substrate. The active-site Electrophile is the His-96. Glu-170 acts as the Proton acceptor in catalysis. Residues Gly-176, Ser-216, and 237-238 (GG) each bind substrate.

This sequence belongs to the triosephosphate isomerase family. Homodimer.

The protein localises to the cytoplasm. The enzyme catalyses D-glyceraldehyde 3-phosphate = dihydroxyacetone phosphate. The protein operates within carbohydrate biosynthesis; gluconeogenesis. Its pathway is carbohydrate degradation; glycolysis; D-glyceraldehyde 3-phosphate from glycerone phosphate: step 1/1. Functionally, involved in the gluconeogenesis. Catalyzes stereospecifically the conversion of dihydroxyacetone phosphate (DHAP) to D-glyceraldehyde-3-phosphate (G3P). In Magnetococcus marinus (strain ATCC BAA-1437 / JCM 17883 / MC-1), this protein is Triosephosphate isomerase.